The primary structure comprises 397 residues: Major outer membrane porin, serovar C (397 aa).

A signal peptide spans 1–22 (MKKLLKSVLVFAALSSASSLQA).

It belongs to the chlamydial porin (CP) (TC 1.B.2) family. Part of a disulfide cross-linked outer membrane complex (COMC) composed of the major outer membrane porin (MOMP), the small cysteine-rich protein (OmcA) and the large cysteine-rich periplasmic protein (OmcB).

The protein localises to the cell outer membrane. Its function is as follows. In elementary bodies (EBs, the infectious stage, which is able to survive outside the host cell) provides the structural integrity of the outer envelope through disulfide cross-links with the small cysteine-rich protein and the large cysteine-rich periplasmic protein. It has been described in publications as the Sarkosyl-insoluble COMC (Chlamydia outer membrane complex), and serves as the functional equivalent of peptidoglycan. Functionally, permits diffusion of specific solutes through the outer membrane. This Chlamydia trachomatis protein is Major outer membrane porin, serovar C (ompA).